The following is a 730-amino-acid chain: Diacylglycerol kinase alpha (730 aa).

EF-hand domains are found at residues Arg111–Val146 and Glu156–Leu191. Ca(2+) contacts are provided by Asp124, Asp126, Asn128, Glu135, Asp169, Asp171, Ser173, Ser175, and Glu180. 2 consecutive Phorbol-ester/DAG-type zinc fingers follow at residues Asn206–Cys254 and Ser270–Cys320. A DAGKc domain is found at Ser368–Pro501. Residue Lys479 is modified to N6-acetyllysine.

Belongs to the eukaryotic diacylglycerol kinase family. Monomer.

Its subcellular location is the cytoplasm. The protein resides in the cytosol. The enzyme catalyses a 1,2-diacyl-sn-glycerol + ATP = a 1,2-diacyl-sn-glycero-3-phosphate + ADP + H(+). The catalysed reaction is a 1-O-alkyl-sn-glycerol + ATP = a 1-O-alkyl-sn-glycero-3-phosphate + ADP + H(+). It carries out the reaction 1-O-alkyl-2-acyl-sn-glycerol + ATP = 1-O-alkyl-2-acyl-sn-glycero-3-phosphate + ADP + H(+). It catalyses the reaction 1,2-dihexadecanoyl-sn-glycerol + ATP = 1,2-dihexadecanoyl-sn-glycero-3-phosphate + ADP + H(+). The enzyme catalyses 1-hexadecanoyl-2-(9Z-octadecenoyl)-sn-glycerol + ATP = 1-hexadecanoyl-2-(9Z-octadecenoyl)-sn-glycero-3-phosphate + ADP + H(+). The catalysed reaction is 2-(9Z-octadecenoyl)-glycerol + ATP = 2-(9Z-octadecenoyl)-sn-glycero-3-phosphate + ADP + H(+). It carries out the reaction 1,2-di-(9Z-octadecenoyl)-sn-glycerol + ATP = 1,2-di-(9Z-octadecenoyl)-sn-glycero-3-phosphate + ADP + H(+). It catalyses the reaction 1-octadecanoyl-2-(5Z,8Z,11Z,14Z-eicosatetraenoyl)-sn-glycerol + ATP = 1-octadecanoyl-2-(5Z,8Z,11Z,14Z-eicosatetraenoyl)-sn-glycero-3-phosphate + ADP + H(+). The enzyme catalyses 1,2-didecanoyl-sn-glycerol + ATP = 1,2-didecanoyl-sn-glycero-3-phosphate + ADP + H(+). The catalysed reaction is 1-O-hexadecyl-2-acetyl-sn-glycerol + ATP = 1-O-hexadecyl-2-acetyl-sn-glycero-3-phosphate + ADP + H(+). It carries out the reaction 1-O-hexadecyl-2-(5Z,8Z,11Z,14Z-eicosatetraenoyl)-sn-glycerol + ATP = 1-O-hexadecyl-2-(5Z,8Z,11Z,14Z-eicosatetraenoyl)-sn-glycero-3-phosphate + ADP + H(+). It catalyses the reaction 1-O-hexadecyl-2-(9Z-octadecenoyl)-sn-glycerol + ATP = 1-O-hexadecyl-2-(9Z-octadecenoyl)-sn-glycero-3-phosphate + ADP + H(+). The enzyme catalyses 1-O-hexadecyl-sn-glycerol + ATP = 1-O-hexadecyl-sn-glycero-3-phosphate + ADP + H(+). It participates in lipid metabolism; glycerolipid metabolism. Stimulated by calcium and phosphatidylserine. Functionally, diacylglycerol kinase that converts diacylglycerol/DAG into phosphatidic acid/phosphatidate/PA and regulates the respective levels of these two bioactive lipids. Thereby, acts as a central switch between the signaling pathways activated by these second messengers with different cellular targets and opposite effects in numerous biological processes. Also plays an important role in the biosynthesis of complex lipids. Can also phosphorylate 1-alkyl-2-acylglycerol in vitro as efficiently as diacylglycerol provided it contains an arachidonoyl group. Also involved in the production of alkyl-lysophosphatidic acid, another bioactive lipid, through the phosphorylation of 1-alkyl-2-acetyl glycerol. In Mus musculus (Mouse), this protein is Diacylglycerol kinase alpha (Dgka).